Reading from the N-terminus, the 335-residue chain is Legumin type B (335 aa).

Disordered regions lie at residues Pro-47–Val-87 and Thr-102–Gly-155. Residues Asp-105–Asn-118 show a composition bias toward basic and acidic residues. Residues Gln-135–Glu-144 are compositionally biased toward acidic residues. Residues Glu-167–Thr-314 enclose the Cupin type-1 domain.

The protein belongs to the 11S seed storage protein (globulins) family. Hexamer; each subunit is composed of an acidic and a basic chain derived from a single precursor and linked by a disulfide bond.

Its function is as follows. This protein found in the seeds of many leguminous and non-leguminous plants is the source of sulfur-containing amino acids in seed meals. The polypeptide is Legumin type B (LEB7) (Vicia faba (Broad bean)).